Here is a 265-residue protein sequence, read N- to C-terminus: 3-methyl-2-oxobutanoate hydroxymethyltransferase (265 aa).

Mg(2+) contacts are provided by D45 and D84. Residues 45–46 (DS), D84, and K112 each bind 3-methyl-2-oxobutanoate. A Mg(2+)-binding site is contributed by E114. Residue E181 is the Proton acceptor of the active site.

It belongs to the PanB family. In terms of assembly, homodecamer; pentamer of dimers. Requires Mg(2+) as cofactor.

Its subcellular location is the cytoplasm. The catalysed reaction is 3-methyl-2-oxobutanoate + (6R)-5,10-methylene-5,6,7,8-tetrahydrofolate + H2O = 2-dehydropantoate + (6S)-5,6,7,8-tetrahydrofolate. Its pathway is cofactor biosynthesis; (R)-pantothenate biosynthesis; (R)-pantoate from 3-methyl-2-oxobutanoate: step 1/2. Functionally, catalyzes the reversible reaction in which hydroxymethyl group from 5,10-methylenetetrahydrofolate is transferred onto alpha-ketoisovalerate to form ketopantoate. In Yersinia pseudotuberculosis serotype O:1b (strain IP 31758), this protein is 3-methyl-2-oxobutanoate hydroxymethyltransferase.